We begin with the raw amino-acid sequence, 394 residues long: MHNNILIAGAGIGGLSAALGLARKGMRSIVLEKAPELGEIGAGIQLAPNAYHALDALGIGEVARQTGVHVDKLLWMDGMTDKEIASVPLANRFREFFGNPYAVIHRADFHGLLVEACHKTGLVEVRTNAEVVDYENFPDRVEAILHDGSCINGAVLVGADGLWSNVRQKVIGDGDPRVSGHTTYRSVIPAEDMPEELRWNMSTAWAGEGCHMVHYPLKGGKVFNLVLTSNSGASEPEAGVPVTTDEVFEKFKTMKRRPTSLIHKGNNWKRWVLCDRDPLPNWVDGRVTLLGDAAHPMMQYMAQGASMAIEDAVCLAFELGREMDPVSALKKYNRARFARTARVQTYSRYASDFIYHAKGGAAAMRNELMGGMTPTDFFQWINWLYGKETVEKYK.

The protein belongs to the 3-hydroxybenzoate 6-hydroxylase family. Homotrimer. Requires FAD as cofactor.

The catalysed reaction is 3-hydroxybenzoate + NADH + O2 + H(+) = 2,5-dihydroxybenzoate + NAD(+) + H2O. Inhibited by manganese, copper, mercury, and iron ions. Catalyzes the NAD- or NADP-dependent conversion of 3-hydroxybenzoate to gentisate. The affinity of the enzyme toward NAD is twice as high as for NADP. The enzyme shows higher specific activities against the intermediates in the degradation of 2,5-xylenol and 3,5-xylenol, 3-hydroxy-4-methylbenzoate and 3-hydroxy-5-methylbenzoate, respectively, than for 3-hydroxybenzoate. It also shows activity against 3-substituted benzoates. The protein is 3-hydroxybenzoate 6-hydroxylase 1 (xlnD) of Aquipseudomonas alcaligenes (Pseudomonas alcaligenes).